The following is a 96-amino-acid chain: Small ribosomal subunit protein bS6 (96 aa).

It belongs to the bacterial ribosomal protein bS6 family.

Binds together with bS18 to 16S ribosomal RNA. In Synechococcus sp. (strain JA-2-3B'a(2-13)) (Cyanobacteria bacterium Yellowstone B-Prime), this protein is Small ribosomal subunit protein bS6.